The primary structure comprises 530 residues: Inactive ubiquitin carboxyl-terminal hydrolase 17-like protein 7 (530 aa).

The region spanning 80-375 is the USP domain; the sequence is AGLQKIGNTF…QAYVLFYIQK (296 aa). Residues 382 to 392 are compositionally biased toward basic and acidic residues; the sequence is SESVSRGREPR. Disordered stretches follow at residues 382–412, 431–454, and 490–530; these read SESVSRGREPRALGAEDTDRPATQGELKRDH, ESTLDHWKFPQEQNKTKPEFNVRK, and SSTK…LVCQ. Positions 490–512 are enriched in polar residues; it reads SSTKPTDQESMNTGTLASLQGST. Residues 513 to 524 are compositionally biased toward basic residues; that stretch reads RRSKGNNKHSKR.

The protein belongs to the peptidase C19 family. USP17 subfamily.

It localises to the nucleus. It is found in the endoplasmic reticulum. This is Inactive ubiquitin carboxyl-terminal hydrolase 17-like protein 7 (USP17L7) from Homo sapiens (Human).